Reading from the N-terminus, the 366-residue chain is MAPSGSGGVRRRCRRVLYWIPVVFISLLLGWSYYAYAIQLCIVSMENIGEQVVCLMAYHLLFAMFVWSYWKTIFTLPMNPSKEFHLSYAEKELLEREPRGEAHQEVLRRAAKDLPIYTRTMSGAIRYCDRCQLIKPDRCHHCSVCDKCILKMDHHCPWVNNCVGFSNYKFFLLFLAYSLLYCLFIAATDLQYFIRFWTNGLPDTQAKFHIMFLFFAAAMFSVSLSSLFGYHCWLVSKNKSTLEAFRNPVFRHGTDKNGFSLGFSKNMRQVFGDEKKYWLLPVFSSQGDGCSFPTCLVNQDPEQPSTPAGLNSTVKNPENHQFPAKPLRESQSHLLKDSQTWTESSANPGKGKAGMSNPALTMENET.

The Cytoplasmic segment spans residues 1–15; sequence MAPSGSGGVRRRCRR. A helical membrane pass occupies residues 16 to 36; the sequence is VLYWIPVVFISLLLGWSYYAY. Over 37–47 the chain is Lumenal; it reads AIQLCIVSMEN. Residues 48-68 form a helical membrane-spanning segment; the sequence is IGEQVVCLMAYHLLFAMFVWS. The Cytoplasmic portion of the chain corresponds to 69-169; the sequence is YWKTIFTLPM…NNCVGFSNYK (101 aa). The 51-residue stretch at 126-176 folds into the DHHC domain; the sequence is RYCDRCQLIKPDRCHHCSVCDKCILKMDHHCPWVNNCVGFSNYKFFLLFLA. Cys156 serves as the catalytic S-palmitoyl cysteine intermediate. A helical transmembrane segment spans residues 170–190; sequence FFLLFLAYSLLYCLFIAATDL. The Lumenal portion of the chain corresponds to 191 to 207; sequence QYFIRFWTNGLPDTQAK. A helical membrane pass occupies residues 208–228; sequence FHIMFLFFAAAMFSVSLSSLF. The Cytoplasmic portion of the chain corresponds to 229–366; sequence GYHCWLVSKN…NPALTMENET (138 aa). Residues 297-316 are compositionally biased toward polar residues; the sequence is VNQDPEQPSTPAGLNSTVKN. The interval 297–366 is disordered; the sequence is VNQDPEQPST…NPALTMENET (70 aa). A mediates localization to plasma membrane and recycling endosomes region spans residues 298-366; sequence NQDPEQPSTP…NPALTMENET (69 aa). The segment covering 326 to 336 has biased composition (basic and acidic residues); the sequence is PLRESQSHLLK. Residues 334–335 carry the Non-canonical dileucine endocytic signal motif; it reads LL. Residues 337–347 are compositionally biased toward polar residues; sequence DSQTWTESSAN. Residues 357–360 carry the NPxY-like endocytic signal motif; the sequence is NPAL.

The protein belongs to the DHHC palmitoyltransferase family. As to quaternary structure, monomer. Homodimer. The monomeric form has a higher catalytic activity. Autopalmitoylated. In terms of tissue distribution, expressed in all brain regions.

It is found in the postsynaptic density. Its subcellular location is the postsynaptic recycling endosome membrane. It localises to the cell membrane. The protein localises to the endoplasmic reticulum membrane. The protein resides in the golgi apparatus membrane. The catalysed reaction is L-cysteinyl-[protein] + hexadecanoyl-CoA = S-hexadecanoyl-L-cysteinyl-[protein] + CoA. It catalyses the reaction L-cysteinyl-[protein] + tetradecanoyl-CoA = S-tetradecanoyl-L-cysteinyl-[protein] + CoA. The enzyme catalyses L-cysteinyl-[protein] + octadecanoyl-CoA = S-octadecanoyl-L-cysteinyl-[protein] + CoA. Its function is as follows. Palmitoyltransferase that catalyzes the addition of palmitate onto various protein substrates and is involved in a variety of cellular processes. Has no stringent fatty acid selectivity and in addition to palmitate can also transfer onto target proteins myristate from tetradecanoyl-CoA and stearate from octadecanoyl-CoA. In the nervous system, plays a role in long term synaptic potentiation by palmitoylating AKAP5 through which it regulates protein trafficking from the dendritic recycling endosomes to the plasma membrane and controls both structural and functional plasticity at excitatory synapses. In dendrites, mediates the palmitoylation of DLG4 when synaptic activity decreases and induces synaptic clustering of DLG4 and associated AMPA-type glutamate receptors. Also mediates the de novo and turnover palmitoylation of RGS7BP, a shuttle for Gi/o-specific GTPase-activating proteins/GAPs, promoting its localization to the plasma membrane in response to the activation of G protein-coupled receptors. Through the localization of these GTPase-activating proteins/GAPs, it also probably plays a role in G protein-coupled receptors signaling in neurons. Also probably plays a role in cell adhesion by palmitoylating CD9 and CD151 to regulate their expression and function. Palmitoylates the endoplasmic reticulum protein CKAP4 and regulates its localization to the plasma membrane. Could also palmitoylate LCK and regulate its localization to the plasma membrane. In Mus musculus (Mouse), this protein is Palmitoyltransferase ZDHHC2.